Reading from the N-terminus, the 1104-residue chain is Protein transport protein SEC31 homolog B (1104 aa).

WD repeat units follow at residues 5-45 (KGVG…EIFK), 62-109 (PSSE…GSQP), 120-160 (VHKG…EPSH), 170-210 (ATQG…PIIN), 214-257 (SVRR…SPVR), 261-301 (GHQR…IVAE), and 304-344 (AGNN…RYGV). Thr526 carries the post-translational modification Phosphothreonine. The tract at residues 527 to 562 (PVSTSAKDFMPSDTDFSTKGEETQEMQEEEEESSDP) is disordered. A compositionally biased stretch (acidic residues) spans 549-560 (TQEMQEEEEESS). Residues 662-707 (TLCDALASKLMAAGNTLAAVLCYICAGNVDRTVEIWSRSLANERDG) form a WD 8 repeat. Disordered regions lie at residues 782–811 (LSAE…PTQA), 851–874 (HQAQ…PSMR), 892–931 (QQPT…QYPN), and 952–994 (TPGV…SNVP). Polar residues-rich tracts occupy residues 786-811 (PETN…PTQA), 863-874 (PAPTSNAQPSMR), and 892-908 (QQPT…SNNA). Residues 959-977 (SVQPASPPTQQAAAQAAPA) show a composition bias toward low complexity.

Belongs to the WD repeat SEC31 family. Interacts with SEC13A and SEC13B.

The protein localises to the golgi apparatus. It is found in the endoplasmic reticulum. Its function is as follows. Required for protein transport from the endoplasmic reticulum to the Golgi apparatus. The chain is Protein transport protein SEC31 homolog B from Arabidopsis thaliana (Mouse-ear cress).